Here is a 160-residue protein sequence, read N- to C-terminus: Protein-export protein SecB (160 aa).

The protein belongs to the SecB family. In terms of assembly, homotetramer, a dimer of dimers. One homotetramer interacts with 1 SecA dimer.

It is found in the cytoplasm. Functionally, one of the proteins required for the normal export of preproteins out of the cell cytoplasm. It is a molecular chaperone that binds to a subset of precursor proteins, maintaining them in a translocation-competent state. It also specifically binds to its receptor SecA. This chain is Protein-export protein SecB, found in Rhizobium johnstonii (strain DSM 114642 / LMG 32736 / 3841) (Rhizobium leguminosarum bv. viciae).